Reading from the N-terminus, the 1700-residue chain is Rho guanine nucleotide exchange factor 28 (1700 aa).

The disordered stretch occupies residues 288 to 343; it reads TEKATMPSGAAETEEEVRNLESGRSPSEEEEDAKSIKSQVDGPSEHEDQDRLPLDR. Residues S312 and S314 each carry the phosphoserine modification. The span at 330–343 shows a compositional bias: basic and acidic residues; that stretch reads PSEHEDQDRLPLDR. S478 carries the post-translational modification Phosphoserine. Residues 483-532 form a disordered region; sequence VADSEGEGGSEPPICYAVGSQSSPRTGLPSGDELDSFETNTEPDCNISRT. Position 623 is a phosphoserine (S623). The segment at 651–698 adopts a Phorbol-ester/DAG-type zinc-finger fold; the sequence is RHQFVPGTFSGVLQCSGCDKTLLGKESLQCANCKANTHKGCKDAVPPC. The 196-residue stretch at 846–1041 folds into the DH domain; that stretch reads KRQDVIFELM…KDMIAAVDLK (196 aa). The PH domain occupies 1095-1184; sequence ATGRFKDILA…NWMRRIQQAV (90 aa). Disordered stretches follow at residues 1184-1205 and 1289-1328; these read VESC…RRKA and KMGD…TEGT. The span at 1191 to 1205 shows a compositional bias: basic and acidic residues; it reads EGGRTSESDEERRKA. The interval 1292 to 1301 is interaction with PTK2/FAK1; required for regulation of axonal branching and synapse formation; that stretch reads DVSQSSEESP. Residues 1309 to 1325 show a composition bias toward polar residues; sequence TPSTQDVPASPTASLVT. The segment at 1369–1380 is mediates cytoplasmic retention and interaction with YWHAH; it reads IIQAIQNLTRLL. Residues 1421–1522 adopt a coiled-coil conformation; the sequence is QEKSRYLEKQ…RERQKMRVQQ (102 aa). The interval 1421–1700 is interaction with microtubules; the sequence is QEKSRYLEKQ…DGAEENILYL (280 aa). Residues 1493–1524 are RNA-binding; the sequence is QLQEYQQSLERLREGQRMVERERQKMRVQQGL. Phosphoserine is present on S1535. A mediates cytoplasmic retention and interaction with MAPK8IP1 region spans residues 1563–1576; that stretch reads FINEAFGHMSLNTS. Positions 1602 to 1700 are disordered; the sequence is SESPTELKID…DGAEENILYL (99 aa). S1604 carries the post-translational modification Phosphoserine. Residues 1647 to 1663 are compositionally biased toward low complexity; it reads DLDSFQSESSSPQDSNQ. Over residues 1664–1675 the composition is skewed to polar residues; that stretch reads RGPQPQTLTTEA.

In terms of assembly, homooligomer; forms some cytoplasmic aggregates. Forms a complex with MAPK8 and MAPK8IP1. Interacts with RHOA. Interacts with microtubules. Interacts with YWHAE and YWHAH. Interacts with PTK2/FAK1. Interacts with NEFL. Interacts with CTNND2; prevents interaction with RHOA. Phosphorylated on tyrosine upon stimulation of cells by laminin. As to expression, highly enriched in the brain (at protein level). Also detected in lung and kidney.

The protein localises to the cytoplasm. Its subcellular location is the cell membrane. In terms of biological role, functions as a RHOA-specific guanine nucleotide exchange factor regulating signaling pathways downstream of integrins and growth factor receptors. Functions in axonal branching, synapse formation and dendritic morphogenesis. Also functions in focal adhesion formation, cell motility and B-lymphocytes activation. May regulate NEFL expression and aggregation and play a role in apoptosis. The protein is Rho guanine nucleotide exchange factor 28 (Arhgef28) of Mus musculus (Mouse).